A 163-amino-acid polypeptide reads, in one-letter code: Small ribosomal subunit protein uS9 (163 aa).

Positions 1–25 (MAENTNNSAVTETEETTAAFTTETN) are enriched in low complexity. The disordered stretch occupies residues 1-40 (MAENTNNSAVTETEETTAAFTTETNSGAGTGTSTIAPGYG).

Belongs to the universal ribosomal protein uS9 family.

This chain is Small ribosomal subunit protein uS9, found in Bifidobacterium animalis subsp. lactis (strain AD011).